The sequence spans 371 residues: Putative glutamate--cysteine ligase 2 (371 aa).

The protein belongs to the glutamate--cysteine ligase type 2 family. YbdK subfamily.

It catalyses the reaction L-cysteine + L-glutamate + ATP = gamma-L-glutamyl-L-cysteine + ADP + phosphate + H(+). Its function is as follows. ATP-dependent carboxylate-amine ligase which exhibits weak glutamate--cysteine ligase activity. The polypeptide is Putative glutamate--cysteine ligase 2 (Nitrosospira multiformis (strain ATCC 25196 / NCIMB 11849 / C 71)).